A 537-amino-acid chain; its full sequence is Myosin-binding protein H (537 aa).

Low complexity predominate over residues 1–25; the sequence is MTGKTAPAAAKKAPAAKKAPAPASK. Positions 1–138 are disordered; it reads MTGKTAPAAA…KPKEEPPSVP (138 aa). Basic and acidic residues predominate over residues 26–69; sequence KAPEPAPKEKPAPTPKEGHAPTPKEEHAPPPKEEHAPPPKEEHA. Over residues 87 to 104 the composition is skewed to low complexity; that stretch reads EQPAAPAAEHAPTPTHEA. A compositionally biased stretch (pro residues) spans 112 to 124; sequence PPPAAPAEAPAPE. The 96-residue stretch at 137 to 232 folds into the Fibronectin type-III 1 domain; sequence VPLSLAVEEV…LEQPVLIREI (96 aa). Positions 236 to 324 constitute an Ig-like C2-type 1 domain; that stretch reads PRIRLPRQLR…NGAEDKAILD (89 aa). Positions 333 to 428 constitute a Fibronectin type-III 2 domain; it reads PPQNLKLVDV…AAGVAHIKKT (96 aa). One can recognise an Ig-like C2-type 2 domain in the interval 444-528; that stretch reads PKFTQPLTDR…VNPLGEASVD (85 aa).

Belongs to the immunoglobulin superfamily. MyBP family. Skeletal muscle. Seems to be also expressed in the slow tonic ald muscle. Not detected in gizzard or heart.

Binds to myosin; probably involved in interaction with thick myofilaments in the A-band. This Gallus gallus (Chicken) protein is Myosin-binding protein H (MYBPH).